The following is a 359-amino-acid chain: 3-isopropylmalate dehydrogenase (359 aa).

An NAD(+)-binding site is contributed by 76–89 (GPKWDTIERSIRPE). 4 residues coordinate substrate: Arg96, Arg106, Arg134, and Asp225. Asp225, Asp249, and Asp253 together coordinate Mg(2+). 283 to 295 (GSAPDIAGQNVAN) contributes to the NAD(+) binding site.

It belongs to the isocitrate and isopropylmalate dehydrogenases family. LeuB type 1 subfamily. In terms of assembly, homodimer. Requires Mg(2+) as cofactor. Mn(2+) serves as cofactor.

The protein resides in the cytoplasm. It catalyses the reaction (2R,3S)-3-isopropylmalate + NAD(+) = 4-methyl-2-oxopentanoate + CO2 + NADH. It functions in the pathway amino-acid biosynthesis; L-leucine biosynthesis; L-leucine from 3-methyl-2-oxobutanoate: step 3/4. Catalyzes the oxidation of 3-carboxy-2-hydroxy-4-methylpentanoate (3-isopropylmalate) to 3-carboxy-4-methyl-2-oxopentanoate. The product decarboxylates to 4-methyl-2 oxopentanoate. The sequence is that of 3-isopropylmalate dehydrogenase from Acinetobacter baylyi (strain ATCC 33305 / BD413 / ADP1).